A 216-amino-acid chain; its full sequence is Adenylate kinase (216 aa).

Residue glycine 10–threonine 15 coordinates ATP. The tract at residues serine 30–valine 59 is NMP. AMP contacts are provided by residues threonine 31, arginine 36, lysine 57–valine 59, glycine 85–arginine 88, and glutamine 92. The LID stretch occupies residues glycine 126 to aspartate 163. Arginine 127 lines the ATP pocket. Zn(2+) contacts are provided by cysteine 130 and cysteine 133. Threonine 136 to tyrosine 137 provides a ligand contact to ATP. Zn(2+) is bound by residues cysteine 150 and cysteine 153. Residues arginine 160 and arginine 171 each contribute to the AMP site. Glutamine 199 lines the ATP pocket.

This sequence belongs to the adenylate kinase family. In terms of assembly, monomer.

The protein resides in the cytoplasm. It catalyses the reaction AMP + ATP = 2 ADP. Its pathway is purine metabolism; AMP biosynthesis via salvage pathway; AMP from ADP: step 1/1. Its function is as follows. Catalyzes the reversible transfer of the terminal phosphate group between ATP and AMP. Plays an important role in cellular energy homeostasis and in adenine nucleotide metabolism. The protein is Adenylate kinase of Symbiobacterium thermophilum (strain DSM 24528 / JCM 14929 / IAM 14863 / T).